Consider the following 337-residue polypeptide: DNA-directed RNA polymerase subunit alpha (337 aa).

Residues 1–233 are alpha N-terminal domain (alpha-NTD); the sequence is MIQKNWQELI…DQLSLFVNFE (233 aa). The segment at 249 to 337 is alpha C-terminal domain (alpha-CTD); the sequence is FNPALLKKVD…DLAKRYEDQY (89 aa).

It belongs to the RNA polymerase alpha chain family. Homodimer. The RNAP catalytic core consists of 2 alpha, 1 beta, 1 beta' and 1 omega subunit. When a sigma factor is associated with the core the holoenzyme is formed, which can initiate transcription.

The catalysed reaction is RNA(n) + a ribonucleoside 5'-triphosphate = RNA(n+1) + diphosphate. In terms of biological role, DNA-dependent RNA polymerase catalyzes the transcription of DNA into RNA using the four ribonucleoside triphosphates as substrates. The sequence is that of DNA-directed RNA polymerase subunit alpha from Bartonella quintana (strain Toulouse) (Rochalimaea quintana).